A 78-amino-acid polypeptide reads, in one-letter code: Sec-independent protein translocase protein TatA (78 aa).

Residues 1–21 (MGSLSIWHWLIVLLIVALVFG) traverse the membrane as a helical segment. 2 stretches are compositionally biased toward basic and acidic residues: residues 39–57 (FKEGMKDGETPEGQQRDQL) and 65–78 (VDAKEKAPHSGDSR). Residues 39-78 (FKEGMKDGETPEGQQRDQLSRTNTVDVDAKEKAPHSGDSR) are disordered.

Belongs to the TatA/E family. The Tat system comprises two distinct complexes: a TatABC complex, containing multiple copies of TatA, TatB and TatC subunits, and a separate TatA complex, containing only TatA subunits. Substrates initially bind to the TatABC complex, which probably triggers association of the separate TatA complex to form the active translocon.

Its subcellular location is the cell inner membrane. Its function is as follows. Part of the twin-arginine translocation (Tat) system that transports large folded proteins containing a characteristic twin-arginine motif in their signal peptide across membranes. TatA could form the protein-conducting channel of the Tat system. This chain is Sec-independent protein translocase protein TatA, found in Paraburkholderia phymatum (strain DSM 17167 / CIP 108236 / LMG 21445 / STM815) (Burkholderia phymatum).